A 224-amino-acid chain; its full sequence is MTAKLNSVIINPSVAHTATVIFLHGLGDSGQGWSFMANTWSNFKHIKWIFPNAPSIPVTVNNGMKMPAWYDIYSFADMKREDENGILRSAGQLHELIDAELALGIPSDRILIGGFSQGCMVSLYAGLTYPKRLAGIMGHSGFLPLASKFPSALSRVAKEIPILLTYMTEDPIVPSVLSSASAKYLINNLQLKCLDRPFEGDAHSLSSESFMAMYKFTQTVIGSP.

Residues serine 116, aspartate 170, and histidine 203 each act as charge relay system in the active site.

It belongs to the AB hydrolase superfamily. AB hydrolase 2 family.

It localises to the cytoplasm. It is found in the nucleus. The catalysed reaction is S-hexadecanoyl-L-cysteinyl-[protein] + H2O = L-cysteinyl-[protein] + hexadecanoate + H(+). In terms of biological role, hydrolyzes fatty acids from S-acylated cysteine residues in proteins with a strong preference for palmitoylated G-alpha proteins over other acyl substrates. Mediates the deacylation of G-alpha proteins such as GPA1 in vivo, but has weak or no activity toward palmitoylated Ras proteins. Has weak lysophospholipase activity in vitro; however such activity may not exist in vivo. This chain is Acyl-protein thioesterase 1, found in Schizosaccharomyces pombe (strain 972 / ATCC 24843) (Fission yeast).